We begin with the raw amino-acid sequence, 188 residues long: GTPase KRas (188 aa).

Residues 10 to 18 (GAGGVGKSA), 29 to 35 (VDEYDPT), 59 to 60 (AG), and 116 to 119 (NKCD) contribute to the GTP site. The Effector region motif lies at 32-40 (YDPTIEDSY). The tract at residues 167-188 (KEKMSKEGKKKKKKSKTKCILM) is disordered. C185 carries the post-translational modification Cysteine methyl ester. C185 is lipidated: S-farnesyl cysteine. Residues 186–188 (ILM) constitute a propeptide, removed in mature form.

Belongs to the small GTPase superfamily. Ras family.

It localises to the cell membrane. The protein localises to the cytoplasm. It carries out the reaction GTP + H2O = GDP + phosphate + H(+). Alternates between an inactive form bound to GDP and an active form bound to GTP. Activated by a guanine nucleotide-exchange factor (GEF) and inactivated by a GTPase-activating protein (GAP). In terms of biological role, ras proteins bind GDP/GTP and possess intrinsic GTPase activity. Plays an important role in the regulation of cell proliferation. This is GTPase KRas (kras1) from Oryzias latipes (Japanese rice fish).